The following is a 397-amino-acid chain: CCA-adding enzyme (397 aa).

Residues G26 and R29 each coordinate ATP. Residues G26 and R29 each contribute to the CTP site. Mg(2+)-binding residues include D39 and D41. ATP-binding residues include R110, D153, R156, R159, and R162. R110, D153, R156, R159, and R162 together coordinate CTP.

Belongs to the tRNA nucleotidyltransferase/poly(A) polymerase family. Bacterial CCA-adding enzyme type 3 subfamily. As to quaternary structure, homodimer. Mg(2+) serves as cofactor.

The enzyme catalyses a tRNA precursor + 2 CTP + ATP = a tRNA with a 3' CCA end + 3 diphosphate. The catalysed reaction is a tRNA with a 3' CCA end + 2 CTP + ATP = a tRNA with a 3' CCACCA end + 3 diphosphate. In terms of biological role, catalyzes the addition and repair of the essential 3'-terminal CCA sequence in tRNAs without using a nucleic acid template. Adds these three nucleotides in the order of C, C, and A to the tRNA nucleotide-73, using CTP and ATP as substrates and producing inorganic pyrophosphate. tRNA 3'-terminal CCA addition is required both for tRNA processing and repair. Also involved in tRNA surveillance by mediating tandem CCA addition to generate a CCACCA at the 3' terminus of unstable tRNAs. While stable tRNAs receive only 3'-terminal CCA, unstable tRNAs are marked with CCACCA and rapidly degraded. This chain is CCA-adding enzyme, found in Bacillus cereus (strain AH187).